We begin with the raw amino-acid sequence, 152 residues long: Transcriptional repressor NrdR (152 aa).

Residues Cys-3–Cys-34 fold into a zinc finger. One can recognise an ATP-cone domain in the interval Ile-49–Glu-139.

The protein belongs to the NrdR family. Zn(2+) is required as a cofactor.

Functionally, negatively regulates transcription of bacterial ribonucleotide reductase nrd genes and operons by binding to NrdR-boxes. In Opitutus terrae (strain DSM 11246 / JCM 15787 / PB90-1), this protein is Transcriptional repressor NrdR.